Reading from the N-terminus, the 74-residue chain is Lambda-hexatoxin-Hv1d (74 aa).

The N-terminal stretch at 1-22 is a signal peptide; the sequence is MNTATCFIVLLVVATVIGGIEA. Positions 23–35 are excised as a propeptide; it reads GESDMRKDVMGLF. 4 cysteine pairs are disulfide-bonded: Cys40–Cys54, Cys47–Cys59, Cys50–Cys51, and Cys53–Cys69.

The protein belongs to the neurotoxin 11 (kappa toxin) family. As to expression, expressed by the venom gland.

The protein localises to the secreted. Functionally, this excitatory toxin inhibits insect calcium-activated potassium (KCa) channels (Slo-type). The chain is Lambda-hexatoxin-Hv1d from Hadronyche versuta (Blue mountains funnel-web spider).